Here is a 91-residue protein sequence, read N- to C-terminus: Class I hydrophobin 3 (91 aa).

An N-terminal signal peptide occupies residues 1-17; the sequence is MLFRLFTIPSIALGVLG. 4 disulfide bridges follow: Cys31-Cys70, Cys35-Cys61, Cys36-Cys53, and Cys71-Cys87.

The protein belongs to the fungal hydrophobin family. In terms of assembly, self-assembles to form functional amyloid fibrils called rodlets. Self-assembly into fibrillar rodlets occurs spontaneously at hydrophobic:hydrophilic interfaces and the rodlets further associate laterally to form amphipathic monolayers. In terms of tissue distribution, expressed in conidia.

Its subcellular location is the secreted. It is found in the cell wall. Its function is as follows. Aerial growth, conidiation, and dispersal of filamentous fungi in the environment rely upon a capability of their secreting small amphipathic proteins called hydrophobins (HPBs) with low sequence identity. Class I can self-assemble into an outermost layer of rodlet bundles on aerial cell surfaces, conferring cellular hydrophobicity that supports fungal growth, development and dispersal; whereas Class II form highly ordered films at water-air interfaces through intermolecular interactions but contribute nothing to the rodlet structure. HYD3 is a class I hydrophobin located on the conidial surface that activates specifically the humoral and cellular immunity of Metarhizium acridum's own host insect, Locusta migratoria manilensis (Meyen) but not that of other non-host insects. Improves the resistance of locusts to both specialist and generalist fungal pathogens (wide host range) when topically applied to the cuticle, but has no effect on the fungal resistance of other insects, including Spodoptera frugiperda and Galleria mellonella. The protein is Class I hydrophobin 3 of Metarhizium acridum (strain CQMa 102).